Consider the following 321-residue polypeptide: Putative ribose-phosphate pyrophosphokinase 2 (321 aa).

Residues 41–43 and 100–101 contribute to the ATP site; these read DGE and RQ. A Mg(2+)-binding site is contributed by His134. Residues Asp223 and 227–231 contribute to the D-ribose 5-phosphate site; that span reads NTGVT.

It belongs to the ribose-phosphate pyrophosphokinase family. Class I subfamily. As to quaternary structure, homohexamer. It depends on Mg(2+) as a cofactor.

It is found in the cytoplasm. It catalyses the reaction D-ribose 5-phosphate + ATP = 5-phospho-alpha-D-ribose 1-diphosphate + AMP + H(+). It participates in metabolic intermediate biosynthesis; 5-phospho-alpha-D-ribose 1-diphosphate biosynthesis; 5-phospho-alpha-D-ribose 1-diphosphate from D-ribose 5-phosphate (route I): step 1/1. Functionally, involved in the biosynthesis of the central metabolite phospho-alpha-D-ribosyl-1-pyrophosphate (PRPP) via the transfer of pyrophosphoryl group from ATP to 1-hydroxyl of ribose-5-phosphate (Rib-5-P). This chain is Putative ribose-phosphate pyrophosphokinase 2, found in Lactococcus lactis subsp. lactis (strain IL1403) (Streptococcus lactis).